The sequence spans 320 residues: Beta-ketoacyl-[acyl-carrier-protein] synthase III (320 aa).

Active-site residues include cysteine 113 and histidine 247. Residues 248-252 (QANRR) form an ACP-binding region. Residue asparagine 277 is part of the active site.

Belongs to the thiolase-like superfamily. FabH family. In terms of assembly, homodimer.

The protein localises to the cytoplasm. It carries out the reaction malonyl-[ACP] + acetyl-CoA + H(+) = 3-oxobutanoyl-[ACP] + CO2 + CoA. It functions in the pathway lipid metabolism; fatty acid biosynthesis. Functionally, catalyzes the condensation reaction of fatty acid synthesis by the addition to an acyl acceptor of two carbons from malonyl-ACP. Catalyzes the first condensation reaction which initiates fatty acid synthesis and may therefore play a role in governing the total rate of fatty acid production. Possesses both acetoacetyl-ACP synthase and acetyl transacylase activities. Its substrate specificity determines the biosynthesis of branched-chain and/or straight-chain of fatty acids. This Acidiphilium cryptum (strain JF-5) protein is Beta-ketoacyl-[acyl-carrier-protein] synthase III.